A 337-amino-acid polypeptide reads, in one-letter code: MRVLGIETSCDETGIAVYDDKAGLLANQLYSQVKLHADYGGVVPELASRDHVRKTVPLIQAALKEANLSAKDIDAVAYTAGPGLVGALLVGATIGRALAFAWGVPAVPVHHMEGHLLAPMLEENAPEFPFVALLVSGGHTQLISVTGIGEYLLLGESVDDAAGEAFDKTAKLLGLDYPGGPMLSRMAQQGTVGRFTFPRPMTDRPGLDFSFSGLKTFAANTIRANGDDDQTRADIARAFEDAVVDTLAIKSKRALDQTGFKRLVIAGGVSANQTLRLKLADMMQKRGGEVFYARPEFCTDNGAMIAYAGMVRLRSNLNSELSVSVRPRWPLSELPKV.

Residues H111 and H115 each coordinate Fe cation. Substrate-binding positions include 134-138 (LVSGG), D167, G180, and N272. D300 lines the Fe cation pocket.

This sequence belongs to the KAE1 / TsaD family. Requires Fe(2+) as cofactor.

The protein resides in the cytoplasm. The catalysed reaction is L-threonylcarbamoyladenylate + adenosine(37) in tRNA = N(6)-L-threonylcarbamoyladenosine(37) in tRNA + AMP + H(+). In terms of biological role, required for the formation of a threonylcarbamoyl group on adenosine at position 37 (t(6)A37) in tRNAs that read codons beginning with adenine. Is involved in the transfer of the threonylcarbamoyl moiety of threonylcarbamoyl-AMP (TC-AMP) to the N6 group of A37, together with TsaE and TsaB. TsaD likely plays a direct catalytic role in this reaction. This is tRNA N6-adenosine threonylcarbamoyltransferase from Yersinia pseudotuberculosis serotype I (strain IP32953).